The chain runs to 322 residues: MADVLTELPGVGPSTAEKLIEAGYLDFMKIATATIGELTDIEGISEKAAAKMIMAARDLCDLGFKSGVELLRQRQSVWRLSTGSKELDTVLAGGLESQSVTEFAGMYGSGKTQIMHQSCVNLQIAGKIYADLEGVVEEELEHPKAVYIDTEGTFRPERVVQMAEGLGIDGQLVLDNTFVARAYNSDMQMLFAEKIEDLIKGGNNIKLVIIDSLTSTFRNEFTGRGKLAERQQKLGRHMATLNKLADLYNCIVLVTNQVAAKPDAFFGVAEQAIGGHVVGHAATFRFFLRKSKGDKRVAKLYDSPHLPDSEAVFRITEKGIMD.

105-112 lines the ATP pocket; sequence GMYGSGKT.

Belongs to the eukaryotic RecA-like protein family.

Functionally, involved in DNA repair and in homologous recombination. Binds and assemble on single-stranded DNA to form a nucleoprotein filament. Hydrolyzes ATP in a ssDNA-dependent manner and promotes DNA strand exchange between homologous DNA molecules. The protein is DNA repair and recombination protein RadA of Methanococcus maripaludis (strain C7 / ATCC BAA-1331).